A 370-amino-acid chain; its full sequence is MRVIFSGGGTGGHIYPIMALIERLKERKLVTNDEILFVGTDRGLESKIVPAAGVPFRTLKIKGFDRKHPLKNFETIELFIKATKEAKQIIKDFKPDVVVGTGGYVSGAIVYEAAKMHIPTIIHESNSVVGLANKFLAHYVDKICYTFDDAAKQFSEKKKLVKTGNPRSQQVLGLNKDNVDLAKKWGLNPNMPTVLIFGGSRGALAINQIVEKSLPELETKPYQVIWATGQLYYGDVKKKLAGKEISSNVKIVPYIDNMPGLLPQMTCVVARSGATSLAEFTALGVPVILIPSPNVTHNHQMKNAMDMEKAGAALVIAEDDLNPNNFVSSIDHILLDTNYAKQMSEASRRLGVPDASDQVISVMEGLIKNK.

UDP-N-acetyl-alpha-D-glucosamine contacts are provided by residues 10-12 (TGG), asparagine 126, serine 200, isoleucine 255, and glutamine 300.

This sequence belongs to the glycosyltransferase 28 family. MurG subfamily.

Its subcellular location is the cell membrane. The enzyme catalyses Mur2Ac(oyl-L-Ala-gamma-D-Glu-L-Lys-D-Ala-D-Ala)-di-trans,octa-cis-undecaprenyl diphosphate + UDP-N-acetyl-alpha-D-glucosamine = beta-D-GlcNAc-(1-&gt;4)-Mur2Ac(oyl-L-Ala-gamma-D-Glu-L-Lys-D-Ala-D-Ala)-di-trans,octa-cis-undecaprenyl diphosphate + UDP + H(+). It participates in cell wall biogenesis; peptidoglycan biosynthesis. Functionally, cell wall formation. Catalyzes the transfer of a GlcNAc subunit on undecaprenyl-pyrophosphoryl-MurNAc-pentapeptide (lipid intermediate I) to form undecaprenyl-pyrophosphoryl-MurNAc-(pentapeptide)GlcNAc (lipid intermediate II). This chain is UDP-N-acetylglucosamine--N-acetylmuramyl-(pentapeptide) pyrophosphoryl-undecaprenol N-acetylglucosamine transferase, found in Lactobacillus gasseri (strain ATCC 33323 / DSM 20243 / BCRC 14619 / CIP 102991 / JCM 1131 / KCTC 3163 / NCIMB 11718 / NCTC 13722 / AM63).